The primary structure comprises 145 residues: Small ribosomal subunit protein uS9 (145 aa).

It belongs to the universal ribosomal protein uS9 family.

The protein localises to the cytoplasm. This chain is Small ribosomal subunit protein uS9 (RPS16), found in Fritillaria agrestis (Stinkbells).